The following is a 391-amino-acid chain: Winged helix repair factor 1 (391 aa).

Composition is skewed to low complexity over residues 1-24 and 49-63; these read MNIKRNQNNSIDNNLSIDSNPSPI and LSFNTSNISNLSNIN. The disordered stretch occupies residues 1–95; sequence MNIKRNQNNS…SITTTTATST (95 aa). Residues 64–74 are compositionally biased toward acidic residues; that stretch reads GEEDNDDDDRE. Over residues 82–95 the composition is skewed to low complexity; the sequence is NPNPSITTTTATST.

Belongs to the STK19 family.

It localises to the nucleus. Functionally, DNA-binding protein which is required for efficient transcription-coupled nucleotide excision repair. This is Winged helix repair factor 1 from Dictyostelium discoideum (Social amoeba).